A 290-amino-acid polypeptide reads, in one-letter code: Ribosomal RNA small subunit methyltransferase A (290 aa).

Asn-27, Leu-29, Gly-54, Glu-75, Asp-100, and Asn-125 together coordinate S-adenosyl-L-methionine.

It belongs to the class I-like SAM-binding methyltransferase superfamily. rRNA adenine N(6)-methyltransferase family. RsmA subfamily.

Its subcellular location is the cytoplasm. The catalysed reaction is adenosine(1518)/adenosine(1519) in 16S rRNA + 4 S-adenosyl-L-methionine = N(6)-dimethyladenosine(1518)/N(6)-dimethyladenosine(1519) in 16S rRNA + 4 S-adenosyl-L-homocysteine + 4 H(+). Its function is as follows. Specifically dimethylates two adjacent adenosines (A1518 and A1519) in the loop of a conserved hairpin near the 3'-end of 16S rRNA in the 30S particle. May play a critical role in biogenesis of 30S subunits. In Streptococcus thermophilus (strain ATCC BAA-491 / LMD-9), this protein is Ribosomal RNA small subunit methyltransferase A.